A 189-amino-acid chain; its full sequence is GTPase NRas (189 aa).

GTP contacts are provided by residues 10-18 (GAGGVGKSA) and 29-30 (VD). The short motif at 32 to 40 (YDPTIEDSY) is the Effector region element. Residue 57-61 (DTAGQ) participates in GTP binding. Serine 89 is modified (phosphoserine). A GTP-binding site is contributed by 116–119 (NKCD). The segment at 166–185 (YRMKKLNSNDDGTQGCMGLP) is hypervariable region. Lysine 170 is covalently cross-linked (Glycyl lysine isopeptide (Lys-Gly) (interchain with G-Cter in ubiquitin)). Cysteine 181 carries the S-palmitoyl cysteine lipid modification. A lipid anchor (S-farnesyl cysteine) is attached at cysteine 186. A propeptide spans 187–189 (VVM) (removed in mature form).

The protein belongs to the small GTPase superfamily. Ras family. As to quaternary structure, interacts (active GTP-bound form preferentially) with RGS14. Interacts (active GTP-bound form) with RASSF7. Interacts (active GTP-bound form) with both SHOC2 and PP1c (all isoforms) to form a tertiary complex; SHOC2 and PP1c preferably bind M-Ras/MRAS, but they also bind K-Ras/KRAS, N-Ras/NRAS and H-Ras/HRAS. Palmitoylated by the ZDHHC9-GOLGA7 complex. Depalmitoylated by ABHD17A, ABHD17B and ABHD17C. A continuous cycle of de- and re-palmitoylation regulates rapid exchange between plasma membrane and Golgi. Post-translationally, acetylation at Lys-104 prevents interaction with guanine nucleotide exchange factors (GEFs). In terms of processing, ubiquitinated by the BCR(LZTR1) E3 ubiquitin ligase complex at Lys-170 in a non-degradative manner, leading to inhibit Ras signaling by decreasing Ras association with membranes. Phosphorylation at Ser-89 enhances NRAS association with its downstream effectors.

The protein resides in the cell membrane. It localises to the golgi apparatus membrane. It carries out the reaction GTP + H2O = GDP + phosphate + H(+). Alternates between an inactive form bound to GDP and an active form bound to GTP. Activated by a guanine nucleotide-exchange factor (GEF) and inactivated by a GTPase-activating protein (GAP). In terms of biological role, ras proteins bind GDP/GTP and possess intrinsic GTPase activity. This chain is GTPase NRas (NRAS), found in Cavia porcellus (Guinea pig).